We begin with the raw amino-acid sequence, 157 residues long: 3-dehydroquinate dehydratase (157 aa).

Y22 (proton acceptor) is an active-site residue. Substrate-binding residues include N73, H79, and D86. H99 (proton donor) is an active-site residue. Residues L100–S101 and R110 each bind substrate.

Belongs to the type-II 3-dehydroquinase family. In terms of assembly, homododecamer.

It carries out the reaction 3-dehydroquinate = 3-dehydroshikimate + H2O. It functions in the pathway metabolic intermediate biosynthesis; chorismate biosynthesis; chorismate from D-erythrose 4-phosphate and phosphoenolpyruvate: step 3/7. Functionally, catalyzes a trans-dehydration via an enolate intermediate. This chain is 3-dehydroquinate dehydratase, found in Roseiflexus castenholzii (strain DSM 13941 / HLO8).